The chain runs to 161 residues: Ribonuclease P protein component (161 aa).

The disordered stretch occupies residues 1-20; that stretch reads MPDELRAEKSFPSKPYDSLK.

Belongs to the RnpA family. Consists of a catalytic RNA component (M1 or rnpB) and a protein subunit.

It catalyses the reaction Endonucleolytic cleavage of RNA, removing 5'-extranucleotides from tRNA precursor.. Its function is as follows. RNaseP catalyzes the removal of the 5'-leader sequence from pre-tRNA to produce the mature 5'-terminus. It can also cleave other RNA substrates such as 4.5S RNA. The protein component plays an auxiliary but essential role in vivo by binding to the 5'-leader sequence and broadening the substrate specificity of the ribozyme. The protein is Ribonuclease P protein component of Helicobacter pylori (strain P12).